The primary structure comprises 167 residues: U-scoloptoxin-Er5c (167 aa).

An N-terminal signal peptide occupies residues Met1–Gly22. Residues Glu23–Arg94 constitute a propeptide that is removed on maturation. RLWRNWE repeat units lie at residues Arg34–Glu40, Arg61–Glu67, and Arg86–Glu92. Gln95 is subject to Pyrrolidone carboxylic acid. An RLWRNWE 4; approximate repeat occupies Glu107–Glu113. Residues Trp112 to Arg118 constitute a propeptide that is removed on maturation. Gln119 carries the pyrrolidone carboxylic acid modification. One copy of the RLWRNWE 5 repeat lies at Arg134–Glu140. A propeptide spanning residues Trp139 to Glu167 is cleaved from the precursor. Residues Arg147–Glu167 are disordered.

Belongs to the scoloptoxin-08 family. Expressed by the venom gland.

The protein localises to the secreted. The chain is U-scoloptoxin-Er5c from Ethmostigmus rubripes (Giant centipede).